Reading from the N-terminus, the 122-residue chain is MIQMQTNLDVADNSGARRVMCIKVLGGSKRKYASVGDIIVVSVKEAIPRGRVKKGDVMKAVVVRTAKDIRRPDGSVIRFDSNAAVLVDNKREPIGTRIFGPVPRELRAKNHMKIISLAPEVL.

This sequence belongs to the universal ribosomal protein uL14 family. Part of the 50S ribosomal subunit. Forms a cluster with proteins L3 and L19. In the 70S ribosome, L14 and L19 interact and together make contacts with the 16S rRNA in bridges B5 and B8.

In terms of biological role, binds to 23S rRNA. Forms part of two intersubunit bridges in the 70S ribosome. This Chelativorans sp. (strain BNC1) protein is Large ribosomal subunit protein uL14.